Reading from the N-terminus, the 448-residue chain is Adenylosuccinate synthetase (448 aa).

GTP contacts are provided by residues 22–28 (GDEGKGK) and 50–52 (GHT). Catalysis depends on Asp23, which acts as the Proton acceptor. 2 residues coordinate Mg(2+): Asp23 and Gly50. IMP contacts are provided by residues 23 to 26 (DEGK), 48 to 51 (NAGH), Thr139, Arg153, Gln234, Thr249, and Arg321. Residue His51 is the Proton donor of the active site. Residue 317 to 323 (SVTGRPR) coordinates substrate. Residues Arg323, 349 to 351 (KLD), and 431 to 433 (STG) contribute to the GTP site.

This sequence belongs to the adenylosuccinate synthetase family. Homodimer. Mg(2+) is required as a cofactor.

Its subcellular location is the cytoplasm. The catalysed reaction is IMP + L-aspartate + GTP = N(6)-(1,2-dicarboxyethyl)-AMP + GDP + phosphate + 2 H(+). It participates in purine metabolism; AMP biosynthesis via de novo pathway; AMP from IMP: step 1/2. Its function is as follows. Plays an important role in the de novo pathway of purine nucleotide biosynthesis. Catalyzes the first committed step in the biosynthesis of AMP from IMP. This is Adenylosuccinate synthetase from Burkholderia thailandensis (strain ATCC 700388 / DSM 13276 / CCUG 48851 / CIP 106301 / E264).